Here is a 160-residue protein sequence, read N- to C-terminus: MGGLLIKQLSTEEDRVVVIRFGHDYNPECMKQDDILASIAEKVKNMAVIYVVDITEVPDLNSMYELYDDCPTMFFYRNKHIMVDLGTGNNNKINWALTNKQDMIDIIETVYKGARKGKGLVNSPRDFSPQYKFLKKKKKKKNKKKQKKKIKKIKKKIKNN.

The disordered stretch occupies residues 132–160; it reads KFLKKKKKKKNKKKQKKKIKKIKKKIKNN. Positions 133 to 160 are enriched in basic residues; it reads FLKKKKKKKNKKKQKKKIKKIKKKIKNN.

Belongs to the DIM1 family. Component of the precatalytic spliceosome (spliceosome B complex). Component of the U5 snRNP complex. Component of the U4/U6-U5 tri-snRNP complex.

Its subcellular location is the nucleus. In terms of biological role, plays a role in pre-mRNA splicing as component of the U5 snRNP and U4/U6-U5 tri-snRNP complexes that are involved in spliceosome assembly, and as component of the precatalytic spliceosome (spliceosome B complex). The chain is Thioredoxin-like protein 4A homolog (txnl4a) from Dictyostelium discoideum (Social amoeba).